The following is a 296-amino-acid chain: Glutamate 5-kinase (296 aa).

An ATP-binding site is contributed by Lys15. Substrate is bound by residues Ser55, Asp159, and Asn186. ATP-binding positions include 206 to 207 (SD) and 248 to 254 (TGGIATK).

The protein belongs to the glutamate 5-kinase family.

The protein resides in the cytoplasm. The catalysed reaction is L-glutamate + ATP = L-glutamyl 5-phosphate + ADP. It participates in amino-acid biosynthesis; L-proline biosynthesis; L-glutamate 5-semialdehyde from L-glutamate: step 1/2. Functionally, catalyzes the transfer of a phosphate group to glutamate to form L-glutamate 5-phosphate. This is Glutamate 5-kinase from Treponema pallidum (strain Nichols).